We begin with the raw amino-acid sequence, 362 residues long: UDP-N-acetylglucosamine--N-acetylmuramyl-(pentapeptide) pyrophosphoryl-undecaprenol N-acetylglucosamine transferase (362 aa).

UDP-N-acetyl-alpha-D-glucosamine contacts are provided by residues 14-16, N126, R166, S193, and Q294; that span reads TGG.

Belongs to the glycosyltransferase 28 family. MurG subfamily.

It is found in the cell inner membrane. It catalyses the reaction di-trans,octa-cis-undecaprenyl diphospho-N-acetyl-alpha-D-muramoyl-L-alanyl-D-glutamyl-meso-2,6-diaminopimeloyl-D-alanyl-D-alanine + UDP-N-acetyl-alpha-D-glucosamine = di-trans,octa-cis-undecaprenyl diphospho-[N-acetyl-alpha-D-glucosaminyl-(1-&gt;4)]-N-acetyl-alpha-D-muramoyl-L-alanyl-D-glutamyl-meso-2,6-diaminopimeloyl-D-alanyl-D-alanine + UDP + H(+). Its pathway is cell wall biogenesis; peptidoglycan biosynthesis. Cell wall formation. Catalyzes the transfer of a GlcNAc subunit on undecaprenyl-pyrophosphoryl-MurNAc-pentapeptide (lipid intermediate I) to form undecaprenyl-pyrophosphoryl-MurNAc-(pentapeptide)GlcNAc (lipid intermediate II). This chain is UDP-N-acetylglucosamine--N-acetylmuramyl-(pentapeptide) pyrophosphoryl-undecaprenol N-acetylglucosamine transferase, found in Paracoccus denitrificans (strain Pd 1222).